We begin with the raw amino-acid sequence, 572 residues long: Urease subunit alpha (572 aa).

A Urease domain is found at 134-572 (GGIDAHVHMI…VSLGQLYFFS (439 aa)). Ni(2+) contacts are provided by His139, His141, and Lys222. Position 222 is an N6-carboxylysine (Lys222). Residue His224 coordinates substrate. Ni(2+) contacts are provided by His251 and His277. His325 serves as the catalytic Proton donor. Asp365 is a Ni(2+) binding site.

This sequence belongs to the metallo-dependent hydrolases superfamily. Urease alpha subunit family. As to quaternary structure, heterotrimer of UreA (gamma), UreB (beta) and UreC (alpha) subunits. Three heterotrimers associate to form the active enzyme. It depends on Ni cation as a cofactor. In terms of processing, carboxylation allows a single lysine to coordinate two nickel ions.

Its subcellular location is the cytoplasm. It carries out the reaction urea + 2 H2O + H(+) = hydrogencarbonate + 2 NH4(+). It participates in nitrogen metabolism; urea degradation; CO(2) and NH(3) from urea (urease route): step 1/1. This chain is Urease subunit alpha, found in Laribacter hongkongensis (strain HLHK9).